A 999-amino-acid polypeptide reads, in one-letter code: MAATVRRQRPRRLLCWTLVAVLLADLLALSDTLAVMSVDLGSESMKVAIVKPGVPMEIVLNKESRRKTPVTVTLKENERFLGDSAAGMAIKNPKATLRYFQHLLGKQADNPHVALYRDRFPEHELNIDPQRQTVRFQISPQLQFSPEEVLGMVLNYSRSLAEDFAEQPIKDAVITVPAFFNQAERRAVLQAARMAGLKVLQLINDNTATALSYGVFRRKDINSTAQNVMFYDMGSGTTVCTIVTYQTVKTKEAGMQPQLQIRGVGFDRTLGGLEMELRLREHLAKLFNEQRRGQKAKDVRENPRAMAKLLREANRLKTVLSANADHMAQIEGLMDDVDFKAKVTRVESEELCADLFERVPGPVQQALQSAEMSLDEIEQVILVGGATRVPKVQEVLLKAVGKEELGKNINADEAAAMGAVYQAAALSKAFKVKPFVVRDAVIYPILVEFTREVEEEPGVRSLKHNKRVLFSRMGPYPQGKVITFNRYSHDFNFHINYGDLGFLGPEDLRVFGSQNLTTVKLKGVGESLKKYPDYESKGIKAHFNLDESGVLSLDRVESVFETLVEDSPEEESTLTKLGNTISSLFGGGTSSDAKENGTDAVQEEEESPTEGSKDEPGEQGDLKEETEAPVEDTSQPPPPEPKGDAAPEGEKPDEKESGGKSEAQKPEEKGQSGPEGVPPAPEEEKKQKPARKQKMVEEIGVELAVLDLPDLPEDELARSVKKLEDLTLRDLEKQEREKAANSLEAFIFETQDKLYQPEYQEVSTEEQREEISGKLSATSTWLEDEGFGATTVMLKEKLAELKKLCQGLFFRVEERRKWPERLSALDNLLNHSSIFLKGARLIPEMDQIFTEVEMTTLEKVINDTWAWKNATLAEQAKLPATEKPVLLSKDIEAKMMALDREVQYLLNKAKFTKPRPRPKDKNGTRTEPPLNATAGDQEEKVIPPAGQPEEAKPILEPDKEETTTEPTDSEPLELGGPGAESEPKEQTAGQKRSSKNDEL.

A signal peptide spans 1–32; that stretch reads MAATVRRQRPRRLLCWTLVAVLLADLLALSDT. 3 N-linked (GlcNAc...) asparagine glycosylation sites follow: N155, N222, and N515. The tract at residues 564–694 is disordered; it reads VEDSPEEEST…KKQKPARKQK (131 aa). S567 carries the post-translational modification Phosphoserine. The span at 574 to 583 shows a compositional bias: polar residues; sequence LTKLGNTISS. An N-linked (GlcNAc...) asparagine glycan is attached at N596. Composition is skewed to basic and acidic residues over residues 611 to 626 and 641 to 670; these read GSKD…KEET and PKGD…EEKG. N-linked (GlcNAc...) asparagine glycans are attached at residues N830, N862, and N869. The residue at position 883 (K883) is an N6-acetyllysine. Residues 909 to 999 form a disordered region; it reads AKFTKPRPRP…QKRSSKNDEL (91 aa). N922 and N931 each carry an N-linked (GlcNAc...) asparagine glycan. Positions 949-962 are enriched in basic and acidic residues; sequence EEAKPILEPDKEET. A Prevents secretion from ER motif is present at residues 996–999; it reads NDEL.

The protein belongs to the heat shock protein 70 family. Part of a large chaperone multiprotein complex comprising DNAJB11, HSP90B1, HSPA5, HYOU, PDIA2, PDIA4, PDIA6, PPIB, SDF2L1, UGGT1 and very small amounts of ERP29, but not, or at very low levels, CALR nor CANX.

It localises to the endoplasmic reticulum lumen. Functionally, has a pivotal role in cytoprotective cellular mechanisms triggered by oxygen deprivation. Promotes HSPA5/BiP-mediated ATP nucleotide exchange and thereby activates the unfolded protein response (UPR) pathway in the presence of endoplasmic reticulum stress. May play a role as a molecular chaperone and participate in protein folding. This Cricetulus griseus (Chinese hamster) protein is Hypoxia up-regulated protein 1 (HYOU1).